The sequence spans 204 residues: Arginine exporter protein ArgO (204 aa).

Transmembrane regions (helical) follow at residues 1–21 (MWAV…PLGP), 37–57 (LMVA…GIFG), 67–87 (LLLG…GWGA), 111–131 (IIAT…DTFV), 154–174 (TASF…APWL), and 179–199 (VQRV…LQLA).

The protein belongs to the LysE/ArgO transporter (TC 2.A.75) family.

Its subcellular location is the cell inner membrane. The catalysed reaction is L-arginine(in) = L-arginine(out). Involved in the export of arginine. Important to control the intracellular level of arginine and the correct balance between arginine and lysine. In Pectobacterium atrosepticum (strain SCRI 1043 / ATCC BAA-672) (Erwinia carotovora subsp. atroseptica), this protein is Arginine exporter protein ArgO.